A 559-amino-acid chain; its full sequence is uncharacterized protein (559 aa).

Residues 1 to 10 (MSGRRGDHPG) show a composition bias toward basic and acidic residues. The disordered stretch occupies residues 1–76 (MSGRRGDHPG…ERSRVPPRTT (76 aa)). A run of 11 helical transmembrane segments spans residues 128–148 (FAVD…AAAS), 155–175 (VALY…LIGP), 186–206 (VALA…IMNY), 208–228 (GATG…MMVF), 259–279 (VFGL…VEFV), 283–303 (LFQL…GASL), 358–378 (LWGN…PAFV), 387–407 (WVQL…NFAG), 428–448 (VLVT…ATAI), 490–510 (LAWV…WVGF), and 515–535 (ALLI…SLIP).

It to M.leprae ML2143.

It is found in the cell membrane. This is an uncharacterized protein from Mycobacterium tuberculosis (strain CDC 1551 / Oshkosh).